A 219-amino-acid polypeptide reads, in one-letter code: MAFLLHQARFYTTVNHLRDLPPTVQPEIAFAGRSNAGKSTAINVLCNQKRLAFASKTPGRTQHINYFSVGPAAEPVANLVDLPGYGYAEVPGAAKAHWEMLLSTYLATRSQLCGLILMMDSRRPLTELDRRMIEWFAPTGKPIHTLLTKCDKLTRQESINALRTTQKGLDAYRDQGVQGKLTVQLFSALKRTGLDEAHALIESWVRPSVADEKNEPVAQ.

Residues 24 to 207 (VQPEIAFAGR…HALIESWVRP (184 aa)) enclose the EngB-type G domain. GTP is bound by residues 32–39 (GRSNAGKS), 59–63 (GRTQH), 81–84 (DLPG), 148–151 (TKCD), and 186–188 (FSA). Mg(2+)-binding residues include S39 and T61.

It belongs to the TRAFAC class TrmE-Era-EngA-EngB-Septin-like GTPase superfamily. EngB GTPase family. Requires Mg(2+) as cofactor.

Functionally, necessary for normal cell division and for the maintenance of normal septation. The polypeptide is Probable GTP-binding protein EngB (Burkholderia multivorans (strain ATCC 17616 / 249)).